The chain runs to 150 residues: Globin-1 (150 aa).

The Globin domain maps to 11–150; sequence PLSDAEKNKI…MICILLSSAY (140 aa). Residues histidine 74 and histidine 106 each contribute to the heme b site.

It belongs to the globin family. As to quaternary structure, monomer.

This Mordacia mordax (Southern hemisphere lamprey) protein is Globin-1.